The primary structure comprises 90 residues: YcgL domain-containing protein YpsIP31758_2009 (90 aa).

Residues 1 to 85 (MLCAIYRSPK…PPESLLKMHL (85 aa)) enclose the YcgL domain.

The sequence is that of YcgL domain-containing protein YpsIP31758_2009 from Yersinia pseudotuberculosis serotype O:1b (strain IP 31758).